The chain runs to 961 residues: Thrombospondin-4 (961 aa).

The N-terminal stretch at 1–23 (MLAPRGATFLLLHLALQPWLGAG) is a signal peptide. The 169-residue stretch at 24-192 (AQATPQVFDL…LEELKLVVRG (169 aa)) folds into the Laminin G-like domain. The EGF-like 1 domain maps to 286 to 325 (PVRRCDSNPCFRGVRCTDTRDGFQCGPCPEGYTGNGIVCS). 21 disulfides stabilise this stretch: cysteine 290-cysteine 301, cysteine 295-cysteine 310, cysteine 313-cysteine 324, cysteine 330-cysteine 341, cysteine 335-cysteine 350, cysteine 353-cysteine 377, cysteine 383-cysteine 394, cysteine 388-cysteine 403, cysteine 406-cysteine 418, cysteine 424-cysteine 438, cysteine 432-cysteine 448, cysteine 450-cysteine 461, cysteine 477-cysteine 482, cysteine 487-cysteine 507, cysteine 523-cysteine 543, cysteine 546-cysteine 566, cysteine 582-cysteine 602, cysteine 605-cysteine 625, cysteine 643-cysteine 663, cysteine 683-cysteine 703, and cysteine 719-cysteine 940. Residues 326-363 (DVDECRYHPCYPGVRCVNLAPGFRCDACPVGFTGPMMQ) form the EGF-like 2; calcium-binding domain. Positions 379–419 (DIDECRNGACVLNSICINTLGSYRCGPCKPGYIGDQMRGCK) constitute an EGF-like 3; calcium-binding domain. An EGF-like 4 domain is found at 420 to 462 (MERNCRDPELNPCSVNAQCIEERQGDVTCVCGVGWAGDGYICG). TSP type-3 repeat units lie at residues 463-495 (KDVD…NSGQ), 496-531 (EDAD…NVDQ), 532-554 (RNSD…NNDQ), 555-590 (KDTD…NSDQ), 591-613 (EDRD…NPNQ), 614-651 (SDVD…NSAQ), 652-691 (LDTD…NPAQ), and 692-727 (EDSN…EVTL). Positions 562-564 (KGD) match the Cell attachment site motif. The tract at residues 581 to 671 (NCQKVPNSDQ…ECDDDDDNDG (91 aa)) is disordered. Residue asparagine 612 is glycosylated (N-linked (GlcNAc...) asparagine). Positions 640 to 652 (TDNCPTVINSAQL) are enriched in polar residues. Residues 660–671 (GDECDDDDDNDG) are compositionally biased toward acidic residues. A TSP C-terminal domain is found at 731–945 (RAYQTVVLDP…LKYRCNDTIP (215 aa)). N-linked (GlcNAc...) asparagine glycosylation is present at asparagine 941.

The protein belongs to the thrombospondin family. Homopentamer; disulfide-linked. Interacts with PTBP3. Interacts (via EGF-like 3; calcium-binding domain) with ATF6 and facilitates its processing, activation and nuclear translocation. Interacts with NOTCH1.

It is found in the endoplasmic reticulum. The protein resides in the sarcoplasmic reticulum. The protein localises to the secreted. It localises to the extracellular space. Its subcellular location is the extracellular matrix. Functionally, adhesive glycoprotein that mediates cell-to-cell and cell-to-matrix interactions and is involved in various processes including cellular proliferation, migration, adhesion and attachment, inflammatory response to CNS injury, regulation of vascular inflammation and adaptive responses of the heart to pressure overload and in myocardial function and remodeling. Binds to structural extracellular matrix (ECM) proteins and modulates the ECM in response to tissue damage, contributing to cardioprotective and adaptive ECM remodeling. Plays a role in ER stress response, via its interaction with the activating transcription factor 6 alpha (ATF6) which produces adaptive ER stress response factors and protects myocardium from pressure overload. May contribute to spinal presynaptic hypersensitivity and neuropathic pain states after peripheral nerve injury. May play a role in regulating protective astrogenesis from the subventricular zone (SVZ) niche after injury in a NOTCH1-dependent manner. In Bos taurus (Bovine), this protein is Thrombospondin-4 (THBS4).